Consider the following 191-residue polypeptide: Protein GrpE (191 aa).

The protein belongs to the GrpE family. Homodimer.

The protein resides in the cytoplasm. Participates actively in the response to hyperosmotic and heat shock by preventing the aggregation of stress-denatured proteins, in association with DnaK and GrpE. It is the nucleotide exchange factor for DnaK and may function as a thermosensor. Unfolded proteins bind initially to DnaJ; upon interaction with the DnaJ-bound protein, DnaK hydrolyzes its bound ATP, resulting in the formation of a stable complex. GrpE releases ADP from DnaK; ATP binding to DnaK triggers the release of the substrate protein, thus completing the reaction cycle. Several rounds of ATP-dependent interactions between DnaJ, DnaK and GrpE are required for fully efficient folding. In Listeria monocytogenes serotype 1/2a (strain 10403S), this protein is Protein GrpE.